A 386-amino-acid polypeptide reads, in one-letter code: uncharacterized protein (386 aa).

This sequence belongs to the mimivirus L17x/L18x family.

This is an uncharacterized protein from Acanthamoeba polyphaga mimivirus (APMV).